A 375-amino-acid polypeptide reads, in one-letter code: Alpha-2,8-sialyltransferase 8B (375 aa).

The Cytoplasmic portion of the chain corresponds to 1–6; that stretch reads MQLQFR. The chain crosses the membrane as a helical; Signal-anchor for type II membrane protein span at residues 7 to 23; sequence SWMLAALTLLVVFLIFA. Residues 24–375 are Lumenal-facing; it reads DISEIEEEIG…LTVGQCDGAT (352 aa). 4 N-linked (GlcNAc...) asparagine glycosylation sites follow: Asn-60, Asn-72, Asn-89, and Asn-134. Intrachain disulfides connect Cys-157–Cys-307 and Cys-171–Cys-371. Positions 162 and 185 each coordinate CMP-N-acetyl-beta-neuraminate. N-linked (GlcNAc...) asparagine glycosylation is found at Asn-219 and Asn-234. CMP-N-acetyl-beta-neuraminate-binding residues include Thr-294, Thr-295, Gly-296, Trp-316, Tyr-329, and His-330. The Proton donor/acceptor role is filled by His-346.

It belongs to the glycosyltransferase 29 family. In terms of processing, autopolysialylated. Autopolysialylation is not a prerequisite for the polysialylation acitity, but enhances the polysialylation acitity. As to expression, highly expressed in fetal brain, kidney and heart and to a much lesser extent in adult heart and thymus.

It localises to the golgi apparatus membrane. It is found in the secreted. The protein localises to the cell membrane. It carries out the reaction [N-acetyl-alpha-D-neuraminosyl-(2-&gt;8)](n) + CMP-N-acetyl-beta-neuraminate = [N-acetyl-alpha-D-neuraminosyl-(2-&gt;8)](n+1) + CMP + H(+). The protein operates within protein modification; protein glycosylation. Its function is as follows. Catalyzes the transfer of a sialic acid from a CMP-linked sialic acid donor onto a terminal alpha-2,3-, alpha-2,6-, or alpha-2,8-linked sialic acid of an N-linked glycan acceptor through alpha-2,8-linkages. Therefore, participates in polysialic acid synthesis on various sialylated N-acetyllactosaminyl oligosaccharides (alpha-2,3-, alpha-2,6-, or alpha-2,8-linked sialic acid), including NCAM1, NCAM1 N-glycans, FETUB N-glycans, and to a lesser extent sialylparagloboside (SPG) and AHSG, which does not require the initial addition of an alpha 2,8-sialic acid. However, does not exhibit sialic acid-polymerase activity. Catalyzes polysialic acid synthesis in the hippocampal on NCAM1 and supports neurite outgrowth. ST8SIA2-mediated polysialylation influences on oligodendrocyte differentiation and may promote the integrity of myelin and axons. In Homo sapiens (Human), this protein is Alpha-2,8-sialyltransferase 8B.